We begin with the raw amino-acid sequence, 115 residues long: NADH-ubiquinone oxidoreductase chain 3 (115 aa).

The next 3 helical transmembrane spans lie at 4–24, 55–75, and 84–104; these read LLTMLTNITLSTLLISIAFWL, FFLVAITFLLFDLEIALLLPI, and INTMTLTAFILVSILALGLAY.

The protein belongs to the complex I subunit 3 family. As to quaternary structure, core subunit of respiratory chain NADH dehydrogenase (Complex I) which is composed of 45 different subunits. Interacts with TMEM186. Interacts with TMEM242.

Its subcellular location is the mitochondrion inner membrane. It catalyses the reaction a ubiquinone + NADH + 5 H(+)(in) = a ubiquinol + NAD(+) + 4 H(+)(out). In terms of biological role, core subunit of the mitochondrial membrane respiratory chain NADH dehydrogenase (Complex I) which catalyzes electron transfer from NADH through the respiratory chain, using ubiquinone as an electron acceptor. Essential for the catalytic activity of complex I. The protein is NADH-ubiquinone oxidoreductase chain 3 of Neotoma lepida (Desert woodrat).